The chain runs to 323 residues: RNA polymerase II holoenzyme cyclin-like subunit (323 aa).

The region spanning 45–176 (DSKQNGIEQS…LLEELESYLI (132 aa)) is the Cyclin N-terminal domain.

The protein belongs to the cyclin family. Cyclin C subfamily. Component of the SRB8-11 complex which consists of SRB8, SSN2/SRB9, SSN3/SRB10 and SSN8/SRB11. The SRB8-11 complex associates with the Mediator complex. The SSN3/SRB10 and SSN8/SRB11 kinase-cyclin pair also associate with the RNA polymerase II holoenzyme. Interacts with ASK10.

The protein localises to the nucleus. Functionally, component of the SRB8-11 complex. The SRB8-11 complex is a regulatory module of the Mediator complex which is itself involved in regulation of basal and activated RNA polymerase II-dependent transcription. The SRB8-11 complex may be involved in the transcriptional repression of a subset of genes regulated by Mediator. It may inhibit the association of the Mediator complex with RNA polymerase II to form the holoenzyme complex. The SRB8-11 complex phosphorylates the C-terminal domain (CTD) of the largest subunit of RNA polymerase II RPB1 at serines 2 and 5. The SSN3/SRB10 and SSN8/SRB11 kinase-cyclin pair may also positively and negatively regulate numerous transcriptional activators in response to changes in nutritional and physiological conditions. The sequence is that of RNA polymerase II holoenzyme cyclin-like subunit (SSN8) from Saccharomyces cerevisiae (strain ATCC 204508 / S288c) (Baker's yeast).